The following is a 310-amino-acid chain: HPr kinase/phosphorylase (310 aa).

Active-site residues include His-138 and Lys-159. 153–160 (GASGIGKS) serves as a coordination point for ATP. Ser-160 is a Mg(2+) binding site. Asp-177 acts as the Proton acceptor; for phosphorylation activity. Proton donor; for dephosphorylation activity in catalysis. Residues 201–210 (IEIRGVGIID) are important for the catalytic mechanism of both phosphorylation and dephosphorylation. Glu-202 contacts Mg(2+). The active site involves Arg-243. The tract at residues 264-269 (PVKTGR) is important for the catalytic mechanism of dephosphorylation.

The protein belongs to the HPrK/P family. As to quaternary structure, homohexamer. Mg(2+) serves as cofactor.

It catalyses the reaction [HPr protein]-L-serine + ATP = [HPr protein]-O-phospho-L-serine + ADP + H(+). The catalysed reaction is [HPr protein]-O-phospho-L-serine + phosphate + H(+) = [HPr protein]-L-serine + diphosphate. Catalyzes the ATP- as well as the pyrophosphate-dependent phosphorylation of a specific serine residue in HPr, a phosphocarrier protein of the phosphoenolpyruvate-dependent sugar phosphotransferase system (PTS). HprK/P also catalyzes the pyrophosphate-producing, inorganic phosphate-dependent dephosphorylation (phosphorolysis) of seryl-phosphorylated HPr (P-Ser-HPr). The two antagonistic activities of HprK/P are regulated by several intracellular metabolites, which change their concentration in response to the absence or presence of rapidly metabolisable carbon sources (glucose, fructose, etc.) in the growth medium. Therefore, by controlling the phosphorylation state of HPr, HPrK/P is a sensor enzyme that plays a major role in the regulation of carbon metabolism and sugar transport: it mediates carbon catabolite repression (CCR), and regulates PTS-catalyzed carbohydrate uptake and inducer exclusion. This Lactococcus lactis subsp. cremoris (strain SK11) protein is HPr kinase/phosphorylase.